We begin with the raw amino-acid sequence, 266 residues long: Glutamate racemase 1 (266 aa).

Residues 11–12 (DS) and 43–44 (YG) each bind substrate. Catalysis depends on Cys74, which acts as the Proton donor/acceptor. Residue 75–76 (NT) coordinates substrate. Residue Cys182 is the Proton donor/acceptor of the active site. 183–184 (TH) is a substrate binding site.

Belongs to the aspartate/glutamate racemases family.

The enzyme catalyses L-glutamate = D-glutamate. Its pathway is cell wall biogenesis; peptidoglycan biosynthesis. Provides the (R)-glutamate required for cell wall biosynthesis. The polypeptide is Glutamate racemase 1 (Caldanaerobacter subterraneus subsp. tengcongensis (strain DSM 15242 / JCM 11007 / NBRC 100824 / MB4) (Thermoanaerobacter tengcongensis)).